The primary structure comprises 397 residues: Elongation factor Tu (397 aa).

A tr-type G domain is found at 10-206 (KPHVNIGTIG…AVDESIPEPQ (197 aa)). The interval 19–26 (GHIDHGKT) is G1. Residue 19–26 (GHIDHGKT) participates in GTP binding. Threonine 26 lines the Mg(2+) pocket. The G2 stretch occupies residues 62-66 (GITIS). A G3 region spans residues 83–86 (DCPG). GTP contacts are provided by residues 83–87 (DCPGH) and 138–141 (NKAD). The interval 138–141 (NKAD) is G4. Residues 176 to 178 (SAL) form a G5 region.

It belongs to the TRAFAC class translation factor GTPase superfamily. Classic translation factor GTPase family. EF-Tu/EF-1A subfamily. In terms of assembly, monomer.

Its subcellular location is the cytoplasm. The enzyme catalyses GTP + H2O = GDP + phosphate + H(+). In terms of biological role, GTP hydrolase that promotes the GTP-dependent binding of aminoacyl-tRNA to the A-site of ribosomes during protein biosynthesis. This Frankia casuarinae (strain DSM 45818 / CECT 9043 / HFP020203 / CcI3) protein is Elongation factor Tu.